Reading from the N-terminus, the 373-residue chain is G protein-coupled receptor 137Ba (373 aa).

Over 1–15 (MQKDSLPTLSPAVPP) the chain is Lumenal. The helical transmembrane segment at 16–36 (YVMLGLTVAYTIFYCLLFVFV) threads the bilayer. Residues 37 to 55 (YVQLWLVLRYRHKRFSYQT) lie on the Cytoplasmic side of the membrane. Residues 56–76 (VFLFLCLLWAALRALLFSFYF) form a helical membrane-spanning segment. Residues 77–84 (KNCVTANT) lie on the Lumenal side of the membrane. A helical transmembrane segment spans residues 85 to 105 (LGPFCFWLLYCFPVCLQFFTL). Residues 106 to 135 (SLMNLYFAQVIFKAKSKYSPELQKYRLPLY) are Cytoplasmic-facing. Residues 136-156 (LLFLSISLLFLLVNLTCALLV) traverse the membrane as a helical segment. Residues 157-176 (KINRANTETVVLVRVTVNDS) are Lumenal-facing. Residues 177–197 (LFVLCAVSLSLCLYRIAKMSL) form a helical membrane-spanning segment. The Cytoplasmic segment spans residues 198–213 (ANIYLEAKGTSVCQVT). A helical membrane pass occupies residues 214-234 (LIGVTVVLLYSSRACYNLVVL). Topologically, residues 235–268 (ALTKIKSINSFDYDWYNVSDQADLKSTLGDAGYV) are lumenal. Residues 269–289 (VFGVILFVWELLPTSLVVYFF) form a helical membrane-spanning segment. Residues 290–373 (RVRKPTLDRS…HLAPEELNPY (84 aa)) are Cytoplasmic-facing.

It belongs to the GPR137 family.

The protein resides in the lysosome membrane. Functionally, lysosomal integral membrane protein that regulates the localization and activity of mTORC1, a signaling complex promoting cell growth in response to growth factors, energy levels, and amino acids. Interacts with Rag GTPases and increases the lysosomial localization and activity of Rag GTPases and thereby regulates mTORC1 translocation and activity in lysosome. Also acts as a negative regulator of osteoclast activity. May be involved in interleukin-4-induced M2 macrophage polarization. Its function is as follows. Also acts as a negative regulator of osteoclast activity. May be involved in interleukin-4-induced M2 macrophage polarization. The chain is G protein-coupled receptor 137Ba from Danio rerio (Zebrafish).